The sequence spans 177 residues: Putative adenylate kinase (177 aa).

ATP-binding residues include Gly-10, Gly-12, Lys-13, Thr-14, and Thr-15. Positions 30-50 (SLRDYAIEKGIGEMKGDELEV) are NMP. Residues 99–109 (ERGYSREKVGE) are LID. The ATP site is built by Arg-100 and Lys-138.

This sequence belongs to the adenylate kinase family. AK6 subfamily. As to quaternary structure, interacts with uS11. Not a structural component of 40S pre-ribosomes, but transiently interacts with them by binding to uS11.

It catalyses the reaction AMP + ATP = 2 ADP. It carries out the reaction ATP + H2O = ADP + phosphate + H(+). Functionally, broad-specificity nucleoside monophosphate (NMP) kinase that catalyzes the reversible transfer of the terminal phosphate group between nucleoside triphosphates and monophosphates. Also has ATPase activity. Involved in the late maturation steps of the 30S ribosomal particles, specifically 16S rRNA maturation. While NMP activity is not required for ribosome maturation, ATPase activity is. Associates transiently with small ribosomal subunit protein uS11. ATP hydrolysis breaks the interaction with uS11. May temporarily remove uS11 from the ribosome to enable a conformational change of the ribosomal RNA that is needed for the final maturation step of the small ribosomal subunit. This is Putative adenylate kinase from Thermococcus gammatolerans (strain DSM 15229 / JCM 11827 / EJ3).